We begin with the raw amino-acid sequence, 261 residues long: MSQEASVDGRFGVASSPTIEEAAGLLEKLLDGSSMVVVAGVCSSEYEGRGASVSTEGDKLLIVKPGGAVILHGPRGFRPLNWQPSTSHTEVATADGLLTLKFYRRTPREVLKIACGSIWYIAWVRFPEEGAFWMYMTEDDLRKAVALHPRELLGEDIRFFAEEKRTPSGKADLYGVDERGNIVIVEVKRVRADESAVRQLEGYVRDYPTQAKVRGILVAPDISDAARRLLESRGLEFRRVDLKKAYSLLKPGRGRSVLDFL.

The protein belongs to the NucS endonuclease family.

It is found in the cytoplasm. Cleaves both 3' and 5' ssDNA extremities of branched DNA structures. This is Endonuclease NucS from Aeropyrum pernix (strain ATCC 700893 / DSM 11879 / JCM 9820 / NBRC 100138 / K1).